Consider the following 283-residue polypeptide: Methylamine utilization ferredoxin-type protein MauN (283 aa).

4Fe-4S ferredoxin-type domains lie at 208–239 and 241–270; these read LRVT…PVVS and KANT…MKLD. Residues cysteine 218, cysteine 221, cysteine 224, cysteine 228, cysteine 250, cysteine 253, cysteine 256, and cysteine 260 each coordinate [4Fe-4S] cluster.

Its pathway is one-carbon metabolism; methylamine degradation. Its function is as follows. Involved in electron transfer. This is Methylamine utilization ferredoxin-type protein MauN (mauN) from Methylobacillus flagellatus (strain ATCC 51484 / DSM 6875 / VKM B-1610 / KT).